The primary structure comprises 194 residues: Protein GrpE (194 aa).

Polar residues predominate over residues 1-14 (MENTQENPTSQNPT). Residues 1–50 (MENTQENPTSQNPTPADETARQAAEAAAPQQEAAANAATDSPVNAEQSAL) are disordered. Low complexity predominate over residues 21 to 38 (RQAAEAAAPQQEAAANAA).

Belongs to the GrpE family. Homodimer.

The protein resides in the cytoplasm. In terms of biological role, participates actively in the response to hyperosmotic and heat shock by preventing the aggregation of stress-denatured proteins, in association with DnaK and GrpE. It is the nucleotide exchange factor for DnaK and may function as a thermosensor. Unfolded proteins bind initially to DnaJ; upon interaction with the DnaJ-bound protein, DnaK hydrolyzes its bound ATP, resulting in the formation of a stable complex. GrpE releases ADP from DnaK; ATP binding to DnaK triggers the release of the substrate protein, thus completing the reaction cycle. Several rounds of ATP-dependent interactions between DnaJ, DnaK and GrpE are required for fully efficient folding. The sequence is that of Protein GrpE from Paraburkholderia phytofirmans (strain DSM 17436 / LMG 22146 / PsJN) (Burkholderia phytofirmans).